Reading from the N-terminus, the 624-residue chain is uncharacterized protein (624 aa).

The disordered stretch occupies residues 113 to 249 (SINVRTSATT…RFHPVTDINK (137 aa)). Positions 118 to 225 (TSATTTESTN…ATTTESTNAS (108 aa)) are enriched in low complexity. Residues 226–249 (AKEDANKDGNAEDNRFHPVTDINK) show a composition bias toward basic and acidic residues.

This is an uncharacterized protein from Saccharomyces cerevisiae (strain ATCC 204508 / S288c) (Baker's yeast).